We begin with the raw amino-acid sequence, 1165 residues long: ATP-dependent helicase/deoxyribonuclease subunit B (1165 aa).

In terms of domain architecture, UvrD-like helicase ATP-binding spans 1 to 324 (MRFIIGGAGS…LVEAQNRREE (324 aa)). 6-13 (GGAGSGKS) serves as a coordination point for ATP. Residues 282-597 (PLRFRGAPEL…IVGTVERSRH (316 aa)) form the UvrD-like helicase C-terminal domain. Positions 803, 1121, 1124, and 1130 each coordinate [4Fe-4S] cluster.

The protein belongs to the helicase family. AddB/RexB type 1 subfamily. As to quaternary structure, heterodimer of AddA and AddB. Requires Mg(2+) as cofactor. [4Fe-4S] cluster serves as cofactor.

Functionally, the heterodimer acts as both an ATP-dependent DNA helicase and an ATP-dependent, dual-direction single-stranded exonuclease. Recognizes the chi site generating a DNA molecule suitable for the initiation of homologous recombination. The AddB subunit has 5' -&gt; 3' nuclease activity but not helicase activity. The protein is ATP-dependent helicase/deoxyribonuclease subunit B of Symbiobacterium thermophilum (strain DSM 24528 / JCM 14929 / IAM 14863 / T).